A 204-amino-acid chain; its full sequence is High frequency lysogenization protein HflD homolog (204 aa).

Belongs to the HflD family.

It localises to the cytoplasm. It is found in the cell inner membrane. This is High frequency lysogenization protein HflD homolog from Xanthomonas axonopodis pv. citri (strain 306).